We begin with the raw amino-acid sequence, 277 residues long: Soluble NSF attachment protein 29 (277 aa).

Over residues 1–11 (MSRNPFDDDYR) the composition is skewed to basic and acidic residues. Disordered regions lie at residues 1–30 (MSRN…MGHY), 49–73 (ESLD…STAQ), and 117–170 (KFTK…ESSR). Polar residues predominate over residues 14-28 (AASSTMPVKSYTTMG). The t-SNARE coiled-coil homology 1 domain occupies 44–106 (EKTLQESLDS…QMTQRNLNSL (63 aa)). Over residues 49-65 (ESLDSTERSRRHLENSE) the composition is skewed to basic and acidic residues. The segment covering 134 to 170 (SKSASRLSETATNLSSGGGSATFSGPSGQRTLTESSR) has biased composition (polar residues). The t-SNARE coiled-coil homology 2 domain maps to 179-241 (EAMDNQIDEN…RDQDKQMQKI (63 aa)).

The protein belongs to the SNAP-25 family.

The protein resides in the synapse. It localises to the synaptosome. Functionally, SNAREs, soluble N-ethylmaleimide-sensitive factor-attachment protein receptors, are essential proteins for fusion of cellular membranes. SNAREs localized on opposing membranes assemble to form a trans-SNARE complex, an extended, parallel four alpha-helical bundle that drives membrane fusion. Plays a role in the processing and secretion of the aspartic protease hrg-7 from the intestine. The polypeptide is Soluble NSF attachment protein 29 (Caenorhabditis elegans).